Consider the following 291-residue polypeptide: 4-hydroxy-tetrahydrodipicolinate synthase (291 aa).

T45 lines the pyruvate pocket. The active-site Proton donor/acceptor is the Y133. K161 serves as the catalytic Schiff-base intermediate with substrate. I203 contributes to the pyruvate binding site.

This sequence belongs to the DapA family. Homotetramer; dimer of dimers.

The protein resides in the cytoplasm. The enzyme catalyses L-aspartate 4-semialdehyde + pyruvate = (2S,4S)-4-hydroxy-2,3,4,5-tetrahydrodipicolinate + H2O + H(+). Its pathway is amino-acid biosynthesis; L-lysine biosynthesis via DAP pathway; (S)-tetrahydrodipicolinate from L-aspartate: step 3/4. Catalyzes the condensation of (S)-aspartate-beta-semialdehyde [(S)-ASA] and pyruvate to 4-hydroxy-tetrahydrodipicolinate (HTPA). This Neisseria gonorrhoeae (strain ATCC 700825 / FA 1090) protein is 4-hydroxy-tetrahydrodipicolinate synthase.